The primary structure comprises 373 residues: RNA cytidine acetyltransferase (373 aa).

ATP is bound at residue arginine 53. Residues 216–218 (IAT) and 223–229 (TGMGYGS) contribute to the acetyl-CoA site. The segment at 246–271 (GEFEEENEAAKPADEESDDESNLLKE) is disordered. Residue arginine 313 coordinates acetyl-CoA.

The protein belongs to the RNA cytidine acetyltransferase family. NAT10 subfamily.

The protein resides in the nucleus. It localises to the nucleolus. The catalysed reaction is a cytidine in 18S rRNA + acetyl-CoA + ATP + H2O = an N(4)-acetylcytidine in 18S rRNA + ADP + phosphate + CoA + H(+). The enzyme catalyses a cytidine in tRNA + acetyl-CoA + ATP + H2O = an N(4)-acetylcytidine in tRNA + ADP + phosphate + CoA + H(+). In terms of biological role, RNA cytidine acetyltransferase with specificity toward both 18S rRNA and tRNAs. Catalyzes the formation of N(4)-acetylcytidine (ac4C) in 18S rRNA. Required for early nucleolar cleavages of precursor rRNA at sites A0, A1 and A2 during 18S rRNA synthesis. Catalyzes the formation of ac4C in serine and leucine tRNAs. Requires a tRNA-binding adapter protein for full tRNA acetyltransferase activity but not for 18S rRNA acetylation. This Achlya ambisexualis (Water mold) protein is RNA cytidine acetyltransferase.